The chain runs to 951 residues: Leucine-rich repeat-containing G-protein coupled receptor 4 (951 aa).

The first 24 residues, 1 to 24, serve as a signal peptide directing secretion; it reads MPGPLRLLCFFALGLLGSAGPSGA. The region spanning 25–57 is the LRRNT domain; sequence APPLCAAPCSCDGDRRVDCSGKGLTAVPEGLSA. The Extracellular portion of the chain corresponds to 25–544; the sequence is APPLCAAPCS…LLGSWMIRLT (520 aa). Cystine bridges form between cysteine 29–cysteine 35 and cysteine 33–cysteine 43. 10 LRR repeats span residues 58 to 79, 82 to 103, 106 to 127, 130 to 151, 154 to 177, 178 to 199, 202 to 223, 226 to 247, 249 to 270, and 273 to 294; these read FTQA…AFKS, FLEE…ALSG, ELKV…AIHG, ALQS…SFEG, QLRH…SNLP, TLQA…AFTN, SLVV…CFDG, NLET…IKAL, SLKE…AFGG, and LLRT…AFHN. N-linked (GlcNAc...) asparagine glycosylation occurs at asparagine 68. N-linked (GlcNAc...) asparagine glycosylation is found at asparagine 188 and asparagine 199. Residues asparagine 294 and asparagine 314 are each glycosylated (N-linked (GlcNAc...) asparagine). LRR repeat units follow at residues 320–341, 344–365, 366–387, 390–411, and 414–435; these read HLES…LCQN, MLRT…NGCR, ALEE…TFQG, SLRI…AFAK, and TITN…GLNG. A disulfide bond links cysteine 339 and cysteine 364. 2 disulfide bridges follow: cysteine 470–cysteine 522 and cysteine 471–cysteine 476. Asparagine 505 carries an N-linked (GlcNAc...) asparagine glycan. Residues 545-565 form a helical membrane-spanning segment; the sequence is VWFIFLVALLFNLLVILTVFA. Topologically, residues 566–575 are cytoplasmic; it reads SCSSLPASKL. A helical transmembrane segment spans residues 576–596; sequence FIGLISVSNLLMGIYTGILTF. The Extracellular portion of the chain corresponds to 597–619; sequence LDAVSWGRFAEFGIWWETGSGCK. A disulfide bond links cysteine 618 and cysteine 693. The helical transmembrane segment at 620-640 threads the bilayer; the sequence is VAGSLAVFSSESAVFLLTLAA. The Cytoplasmic portion of the chain corresponds to 641–661; sequence VERSVFAKDLMKHGKSSHLRQ. The chain crosses the membrane as a helical span at residues 662–682; sequence FQVAALLALLGAAVAGCFPLF. Topologically, residues 683 to 703 are extracellular; the sequence is HGGQYSASPLCLPFPTGETPS. Residues 704–724 traverse the membrane as a helical segment; sequence LGFTVTLVLLNSLAFLLMAII. Over 725–756 the chain is Cytoplasmic; the sequence is YTKLYCNLEKEDLSENSQSSVIKHVAWLIFTN. A helical membrane pass occupies residues 757 to 777; sequence CIFFCPVAFFSFAPLITAISI. At 778–783 the chain is on the extracellular side; sequence SPEIMK. A helical membrane pass occupies residues 784-804; it reads SVTLIFFPLPACLNPVLYVFF. At 805–951 the chain is on the cytoplasmic side; it reads NPKFKEDWKL…YAYNLQRVRD (147 aa). Serine 920 is modified (phosphoserine).

Belongs to the G-protein coupled receptor 1 family.

The protein resides in the cell membrane. Its function is as follows. Receptor for R-spondins that potentiates the canonical Wnt signaling pathway and is involved in the formation of various organs. Upon binding to R-spondins (RSPO1, RSPO2, RSPO3 or RSPO4), associates with phosphorylated LRP6 and frizzled receptors that are activated by extracellular Wnt receptors, triggering the canonical Wnt signaling pathway to increase expression of target genes. In contrast to classical G-protein coupled receptors, does not activate heterotrimeric G-proteins to transduce the signal. Its function as activator of the Wnt signaling pathway is required for the development of various organs, including liver, kidney, intestine, bone, reproductive tract and eye. May also act as a receptor for norrin (NDP), such results however require additional confirmation in vivo. Required during spermatogenesis to activate the Wnt signaling pathway in peritubular myoid cells. Required for the maintenance of intestinal stem cells and Paneth cell differentiation in postnatal intestinal crypts. Acts as a regulator of bone formation and remodeling. Involved in kidney development; required for maintaining the ureteric bud in an undifferentiated state. Involved in the development of the anterior segment of the eye. Required during erythropoiesis. Also acts as a negative regulator of innate immunity by inhibiting TLR2/TLR4 associated pattern-recognition and pro-inflammatory cytokine production. Plays an important role in regulating the circadian rhythms of plasma lipids, partially through regulating the rhythmic expression of MTTP. Required for proper development of GnRH neurons (gonadotropin-releasing hormone expressing neurons) that control the release of reproductive hormones from the pituitary gland. In Rattus norvegicus (Rat), this protein is Leucine-rich repeat-containing G-protein coupled receptor 4 (Lgr4).